Consider the following 505-residue polypeptide: Putative diacyglycerol O-acyltransferase MT0919 (505 aa).

Histidine 167 (proton acceptor) is an active-site residue.

This sequence belongs to the long-chain O-acyltransferase family.

It carries out the reaction an acyl-CoA + a 1,2-diacyl-sn-glycerol = a triacyl-sn-glycerol + CoA. It functions in the pathway glycerolipid metabolism; triacylglycerol biosynthesis. The polypeptide is Putative diacyglycerol O-acyltransferase MT0919 (Mycobacterium tuberculosis (strain CDC 1551 / Oshkosh)).